The sequence spans 619 residues: Secretogranin-2 (619 aa).

Residues 1–30 (MTESKAYRFGAVLLLIHLIFLVPGTEAASF) form the signal peptide. Sulfotyrosine is present on Y153. S176 and S270 each carry phosphoserine. A disordered region spans residues 247-307 (VGGEDWSPME…RKESKDQLSE (61 aa)). Composition is skewed to basic and acidic residues over residues 255 to 286 (MEEK…EMKR) and 295 to 307 (EGNR…QLSE). 4 positions are modified to phosphoserine: S434, S534, S557, and S558.

The protein belongs to the chromogranin/secretogranin protein family. Interacts with Secretogranin III/SCG3. In terms of tissue distribution, brain. Expression in the pituitary is restricted to the anterior lobe. Expression in the hypothalamus is observed in the neuronal cells and neurons of arcuate nucleus, supraoptic nucleus and median eminence (at protein level).

Its subcellular location is the secreted. Its function is as follows. Neuroendocrine protein of the granin family that regulates the biogenesis of secretory granules. The sequence is that of Secretogranin-2 (Scg2) from Rattus norvegicus (Rat).